The chain runs to 910 residues: MLKVFEKIFGSYSDREVKRIKPIIDRIEALEPEMQALSDEQLKAKTPEFKRRLSQGETLDDLLPEAFAVVREASRRVLGMRHFRVQLIGGVVLHQGRIAEMKTGEGKTLVATLPVYLNALEGKGVHVVTVNDYLATRDSEWMGKLYNFLGLSVGLIVHGLTNEERKKAYSCDITYGTNNEFGFDYLRDNMVIYKEDMVQRDLHFAIVDEVDSILIDEARTPLIISGVGDKSTDLYTRADAFVRRLKVKVFTELDDKEQTDDIEADYIVDEKANTATLTASGVKKAEEFFGIQNLSDPDNMTISHHINQALRAHGLMKRDRDYVVKDDQVIIVDEFTGRLMYGRRYSNGLHQAIEAKEGVKVERESKTLASITFQNYFRMYRKLSGMTGTAQTEEQEFRSIYNLDVVVIPTNMPVIRVDHPDSVYKNERGKFNAVINQVIECHKKGQPVLIGTISIEKSELLSSMLKRHGIPHQVLNAKYHEKEAEIIAQAGKLGAVTIATNMAGRGTDILLGGNPEFMAKQEMRKRGFREDVINQATGFNDTNDPEILEARKVYRELYEGFKKITDAEREKVVAAGGLFIIGTERHESRRIDNQLRGRAGRQGDPGESRFYISLEDDLMRLFGSDRLMGMVEALGLEEDQPIEHKMLSNAIENAQKRVESRNFAIRKSVLEYDDVMNKQREVIYAQRRKVLNGENLKENIVKMMENIADYIVNLFCSENPHPDFWDWEGIRSYTEKAYVPEGTLDFSKEQMEDLNKEKLRQIILDSMLKRYEEKEKEFGSELMRELERVVLLRVVDQKWMDHIDDMDQLQHGVRLRAYGHKDPVIEYKFESFEMFEEMNRNIQSDVVRIILNTHIDRNRMPQRQKVAEPVTASHGEEVRKPVVKRNKVGRNELCPCGSGKKYKKCCGIDE.

ATP contacts are provided by residues Q86, 104–108, and D508; that span reads GEGKT. Residues C894, C896, C905, and C906 each coordinate Zn(2+).

It belongs to the SecA family. In terms of assembly, monomer and homodimer. Part of the essential Sec protein translocation apparatus which comprises SecA, SecYEG and auxiliary proteins SecDF. Other proteins may also be involved. Zn(2+) is required as a cofactor.

Its subcellular location is the cell membrane. It is found in the cytoplasm. The catalysed reaction is ATP + H2O + cellular proteinSide 1 = ADP + phosphate + cellular proteinSide 2.. In terms of biological role, part of the Sec protein translocase complex. Interacts with the SecYEG preprotein conducting channel. Has a central role in coupling the hydrolysis of ATP to the transfer of proteins into and across the cell membrane, serving as an ATP-driven molecular motor driving the stepwise translocation of polypeptide chains across the membrane. The polypeptide is Protein translocase subunit SecA (Acetivibrio thermocellus (strain ATCC 27405 / DSM 1237 / JCM 9322 / NBRC 103400 / NCIMB 10682 / NRRL B-4536 / VPI 7372) (Clostridium thermocellum)).